Consider the following 147-residue polypeptide: NADH-quinone oxidoreductase subunit A (147 aa).

The next 3 membrane-spanning stretches (helical) occupy residues 16–36, 68–88, and 98–118; these read FAIF…GGWF, FYLV…LFAW, and VGFV…VYLV.

This sequence belongs to the complex I subunit 3 family. NDH-1 is composed of 13 different subunits. Subunits NuoA, H, J, K, L, M, N constitute the membrane sector of the complex.

Its subcellular location is the cell inner membrane. It catalyses the reaction a quinone + NADH + 5 H(+)(in) = a quinol + NAD(+) + 4 H(+)(out). Its function is as follows. NDH-1 shuttles electrons from NADH, via FMN and iron-sulfur (Fe-S) centers, to quinones in the respiratory chain. The immediate electron acceptor for the enzyme in this species is believed to be ubiquinone. Couples the redox reaction to proton translocation (for every two electrons transferred, four hydrogen ions are translocated across the cytoplasmic membrane), and thus conserves the redox energy in a proton gradient. This Citrobacter koseri (strain ATCC BAA-895 / CDC 4225-83 / SGSC4696) protein is NADH-quinone oxidoreductase subunit A.